The sequence spans 118 residues: Basic phospholipase A2 4 (118 aa).

7 cysteine pairs are disulfide-bonded: C11–C71, C27–C117, C29–C45, C44–C98, C51–C91, C60–C84, and C78–C89. Ca(2+) is bound by residues Y28, G30, and G32. H48 is an active-site residue. D49 contacts Ca(2+). D92 is a catalytic residue.

It belongs to the phospholipase A2 family. Group I subfamily. D49 sub-subfamily. Monomer. Ca(2+) is required as a cofactor. In terms of tissue distribution, expressed by the venom gland.

It is found in the secreted. The enzyme catalyses a 1,2-diacyl-sn-glycero-3-phosphocholine + H2O = a 1-acyl-sn-glycero-3-phosphocholine + a fatty acid + H(+). PLA2 catalyzes the calcium-dependent hydrolysis of the 2-acyl groups in 3-sn-phosphoglycerides. The polypeptide is Basic phospholipase A2 4 (Laticauda semifasciata (Black-banded sea krait)).